Here is a 210-residue protein sequence, read N- to C-terminus: LexA repressor (210 aa).

The H-T-H motif DNA-binding region spans 30 to 50 (RVEIAREIGFKSPNAAEEHLK). Active-site for autocatalytic cleavage activity residues include serine 127 and lysine 164.

This sequence belongs to the peptidase S24 family. In terms of assembly, homodimer.

It catalyses the reaction Hydrolysis of Ala-|-Gly bond in repressor LexA.. Its function is as follows. Represses a number of genes involved in the response to DNA damage (SOS response), including recA and lexA. In the presence of single-stranded DNA, RecA interacts with LexA causing an autocatalytic cleavage which disrupts the DNA-binding part of LexA, leading to derepression of the SOS regulon and eventually DNA repair. This chain is LexA repressor, found in Actinobacillus pleuropneumoniae serotype 5b (strain L20).